The sequence spans 489 residues: Rhamnulokinase (489 aa).

13 to 17 contacts ATP; that stretch reads ASSGR. Cysteines 68 and 222 form a disulfide. Substrate is bound by residues G83 and 236-238; that span reads HDT. D237 functions as the Proton acceptor in the catalytic mechanism. Residue T259 coordinates ATP. N296 serves as a coordination point for substrate. Residue Q304 coordinates ATP. A disulfide bridge connects residues C353 and C370. G402 contacts ATP. C413 and C417 form a disulfide bridge.

It belongs to the rhamnulokinase family. Mg(2+) is required as a cofactor.

The catalysed reaction is L-rhamnulose + ATP = L-rhamnulose 1-phosphate + ADP + H(+). It participates in carbohydrate degradation; L-rhamnose degradation; glycerone phosphate from L-rhamnose: step 2/3. Involved in the catabolism of L-rhamnose (6-deoxy-L-mannose). Catalyzes the transfer of the gamma-phosphate group from ATP to the 1-hydroxyl group of L-rhamnulose to yield L-rhamnulose 1-phosphate. This chain is Rhamnulokinase, found in Salmonella paratyphi B (strain ATCC BAA-1250 / SPB7).